Reading from the N-terminus, the 397-residue chain is Ethanolaminephosphotransferase 1 (397 aa).

Position 2 is an N-acetylalanine (Ala2). 10 helical membrane passes run 47 to 69, 84 to 103, 123 to 145, 150 to 172, 179 to 201, 221 to 243, 256 to 278, 291 to 310, 317 to 339, and 344 to 366; these read WLAP…LLMA, HVPD…AYTL, LFDH…SIFG, GVSV…LSHW, ILFL…IVTA, LFTA…LNFF, VYEA…AWIL, VFYF…LIVC, CPTL…LGVA, and SILL…VRVV. A non-standard amino acid (selenocysteine) is located at residue Sec387.

It belongs to the CDP-alcohol phosphatidyltransferase class-I family. Mg(2+) is required as a cofactor. Mn(2+) serves as cofactor.

It localises to the endoplasmic reticulum membrane. The catalysed reaction is CDP-ethanolamine + a 1,2-diacyl-sn-glycerol = a 1,2-diacyl-sn-glycero-3-phosphoethanolamine + CMP + H(+). The enzyme catalyses 1-O-alkyl-2-acyl-sn-glycerol + CDP-ethanolamine = a 1-O-alkyl-2-acyl-sn-glycero-3-phosphoethanolamine + CMP + H(+). It functions in the pathway phospholipid metabolism; phosphatidylethanolamine biosynthesis; phosphatidylethanolamine from ethanolamine: step 3/3. In terms of biological role, ethanolaminephosphotransferase that catalyzes the transfer of phosphoethanolamine (PE) from CDP-ethanolamine to lipid acceptors, the final step in the synthesis of PE via the 'Kennedy' pathway. PE is the second most abundant phospholipid of membranes in mammals and is involved in various membrane-related cellular processes. The enzyme is critical for the synthesis of several PE species and also catalyzes the synthesis of plasmanyl-PE, a lipid required for proper myelination and neurodevelopment, from 1-alkyl-2-acylglycerol. This Pongo abelii (Sumatran orangutan) protein is Ethanolaminephosphotransferase 1.